A 450-amino-acid polypeptide reads, in one-letter code: Probable galactarate/D-glucarate transporter GudP (450 aa).

Over 1-20 the chain is Cytoplasmic; it reads MSSLSQAASSVEKRTNARYW. Residues 21–41 form a helical membrane-spanning segment; it reads IVVMLFIVTSFNYGDRATLSI. At 42 to 58 the chain is on the periplasmic side; it reads AGSEMAKDIGLDPVGMG. Residues 59 to 79 traverse the membrane as a helical segment; it reads YVFSAFSWAYVIGQIPGGWLL. At 80–85 the chain is on the cytoplasmic side; it reads DRFGSK. A helical transmembrane segment spans residues 86 to 105; that stretch reads RVYFWSIFIWSMFTLLQGFV. Residues 106–109 lie on the Periplasmic side of the membrane; that stretch reads DIFS. Residues 110 to 132 form a helical membrane-spanning segment; that stretch reads GFGIIVALFTLRFLVGLAEAPSF. Topologically, residues 133–153 are cytoplasmic; the sequence is PGNSRIVAAWFPAQERGTAVS. Residues 154–174 traverse the membrane as a helical segment; sequence IFNSAQYFATVIFAPIMGWLT. Over 175-176 the chain is Periplasmic; the sequence is HE. The helical transmembrane segment at 177–197 threads the bilayer; that stretch reads VGWSHVFFFMGGLGIVISFIW. Over 198 to 254 the chain is Cytoplasmic; sequence LKVIHEPNQHPGVNKKELEYIAAGGALINMDQQNTKVKVPFSVKWGQIKQLLGSRMM. A helical transmembrane segment spans residues 255–275; that stretch reads IGVYIGQYCINALTYFFITWF. Over 276–290 the chain is Periplasmic; that stretch reads PVYLVQARGMSILKA. A helical transmembrane segment spans residues 291 to 311; the sequence is GFVASVPAVCGFIGGVLGGII. Topologically, residues 312-329 are cytoplasmic; the sequence is SDWLMRRTGSLNIARKTP. The helical transmembrane segment at 330–350 threads the bilayer; it reads IVMGMLLSMVMVFCNYVNVEW. Methionine 351 is a topological domain (periplasmic). The helical transmembrane segment at 352–372 threads the bilayer; it reads IIGFMALAFFGKGIGALGWAV. The Cytoplasmic portion of the chain corresponds to 373-387; sequence MADTAPKEISGLSGG. The chain crosses the membrane as a helical span at residues 388–408; it reads LFNMFGNISGIVTPIAIGYIV. At 409–415 the chain is on the periplasmic side; sequence GTTGSFN. Residues 416–436 traverse the membrane as a helical segment; the sequence is GALIYVGVHALIAVLSYLVLV. Residues 437-450 are Cytoplasmic-facing; that stretch reads GDIKRIELKPVAGQ.

Belongs to the major facilitator superfamily. Phthalate permease family.

It is found in the cell inner membrane. The catalysed reaction is galactarate(in) + H(+)(in) = galactarate(out) + H(+)(out). The enzyme catalyses D-glucarate(in) + H(+)(in) = D-glucarate(out) + H(+)(out). It catalyses the reaction (R)-glycerate(in) + H(+)(in) = (R)-glycerate(out) + H(+)(out). Probably involved in the uptake of galactarate and/or D-glucarate. May also transport D-glycerate. The protein is Probable galactarate/D-glucarate transporter GudP of Escherichia coli (strain K12).